The chain runs to 116 residues: Large ribosomal subunit protein uL18 (116 aa).

The protein belongs to the universal ribosomal protein uL18 family. In terms of assembly, part of the 50S ribosomal subunit; part of the 5S rRNA/L5/L18/L25 subcomplex. Contacts the 5S and 23S rRNAs.

Its function is as follows. This is one of the proteins that bind and probably mediate the attachment of the 5S RNA into the large ribosomal subunit, where it forms part of the central protuberance. This Pseudomonas putida (strain GB-1) protein is Large ribosomal subunit protein uL18.